The sequence spans 256 residues: Pyridoxine 5'-phosphate synthase (256 aa).

Asn-12 is a 3-amino-2-oxopropyl phosphate binding site. 14 to 15 contacts 1-deoxy-D-xylulose 5-phosphate; the sequence is DH. 3-amino-2-oxopropyl phosphate is bound at residue Arg-23. The active-site Proton acceptor is His-48. Positions 50 and 55 each coordinate 1-deoxy-D-xylulose 5-phosphate. The active-site Proton acceptor is Glu-75. Thr-105 is a binding site for 1-deoxy-D-xylulose 5-phosphate. His-199 functions as the Proton donor in the catalytic mechanism. 3-amino-2-oxopropyl phosphate-binding positions include Gly-200 and 221–222; that span reads GY.

It belongs to the PNP synthase family. Homooctamer; tetramer of dimers.

It is found in the cytoplasm. It carries out the reaction 3-amino-2-oxopropyl phosphate + 1-deoxy-D-xylulose 5-phosphate = pyridoxine 5'-phosphate + phosphate + 2 H2O + H(+). It participates in cofactor biosynthesis; pyridoxine 5'-phosphate biosynthesis; pyridoxine 5'-phosphate from D-erythrose 4-phosphate: step 5/5. Functionally, catalyzes the complicated ring closure reaction between the two acyclic compounds 1-deoxy-D-xylulose-5-phosphate (DXP) and 3-amino-2-oxopropyl phosphate (1-amino-acetone-3-phosphate or AAP) to form pyridoxine 5'-phosphate (PNP) and inorganic phosphate. The sequence is that of Pyridoxine 5'-phosphate synthase from Bradyrhizobium sp. (strain ORS 278).